The sequence spans 425 residues: Serine--tRNA ligase (425 aa).

230–232 lines the L-serine pocket; it reads TAE. Residue 261–263 coordinates ATP; it reads RSE. Residue Glu284 participates in L-serine binding. 348–351 lines the ATP pocket; the sequence is EISS. Residue Ser384 participates in L-serine binding.

It belongs to the class-II aminoacyl-tRNA synthetase family. Type-1 seryl-tRNA synthetase subfamily. In terms of assembly, homodimer. The tRNA molecule binds across the dimer.

It is found in the cytoplasm. The catalysed reaction is tRNA(Ser) + L-serine + ATP = L-seryl-tRNA(Ser) + AMP + diphosphate + H(+). It carries out the reaction tRNA(Sec) + L-serine + ATP = L-seryl-tRNA(Sec) + AMP + diphosphate + H(+). It participates in aminoacyl-tRNA biosynthesis; selenocysteinyl-tRNA(Sec) biosynthesis; L-seryl-tRNA(Sec) from L-serine and tRNA(Sec): step 1/1. Functionally, catalyzes the attachment of serine to tRNA(Ser). Is also able to aminoacylate tRNA(Sec) with serine, to form the misacylated tRNA L-seryl-tRNA(Sec), which will be further converted into selenocysteinyl-tRNA(Sec). This is Serine--tRNA ligase from Streptococcus pyogenes serotype M49 (strain NZ131).